A 67-amino-acid chain; its full sequence is Phycobilisome 7.8 kDa linker polypeptide, allophycocyanin-associated, core (67 aa).

Residues 1 to 56 (GRLFKITACVPSQTRIRTQRELQNTYFTKLVPYENWFREQQRIQKMGGKIVKVELA) enclose the CpcD-like domain.

It belongs to the phycobilisome linker protein family.

It localises to the cellular thylakoid membrane. Its function is as follows. Rod linker protein, associated with allophycocyanin. Linker polypeptides determine the state of aggregation and the location of the disk-shaped phycobiliprotein units within the phycobilisome and modulate their spectroscopic properties in order to mediate a directed and optimal energy transfer. This Mastigocladus laminosus (Fischerella sp.) protein is Phycobilisome 7.8 kDa linker polypeptide, allophycocyanin-associated, core (apcC).